The primary structure comprises 363 residues: Phospho-N-acetylmuramoyl-pentapeptide-transferase (363 aa).

10 consecutive transmembrane segments (helical) span residues 3-23 (QILF…PLLI), 48-68 (GTPT…YFLA), 83-103 (PTFS…VGFL), 121-141 (AKMI…LQFA), 159-179 (FGWT…ILAM), 192-212 (LATG…VWQF), 234-254 (PLDL…FLWW), 261-281 (IFMG…LAIC), 286-306 (LLMA…VIQV), and 340-360 (FWII…AGWA).

The protein belongs to the glycosyltransferase 4 family. MraY subfamily. Requires Mg(2+) as cofactor.

The protein resides in the cell membrane. It carries out the reaction UDP-N-acetyl-alpha-D-muramoyl-L-alanyl-gamma-D-glutamyl-meso-2,6-diaminopimeloyl-D-alanyl-D-alanine + di-trans,octa-cis-undecaprenyl phosphate = di-trans,octa-cis-undecaprenyl diphospho-N-acetyl-alpha-D-muramoyl-L-alanyl-D-glutamyl-meso-2,6-diaminopimeloyl-D-alanyl-D-alanine + UMP. It participates in cell wall biogenesis; peptidoglycan biosynthesis. Catalyzes the initial step of the lipid cycle reactions in the biosynthesis of the cell wall peptidoglycan: transfers peptidoglycan precursor phospho-MurNAc-pentapeptide from UDP-MurNAc-pentapeptide onto the lipid carrier undecaprenyl phosphate, yielding undecaprenyl-pyrophosphoryl-MurNAc-pentapeptide, known as lipid I. The polypeptide is Phospho-N-acetylmuramoyl-pentapeptide-transferase (Streptomyces coelicolor (strain ATCC BAA-471 / A3(2) / M145)).